The chain runs to 541 residues: MAGAIIENMSTKKLCMVGVALLLLQVLAFLVGGLIAPKPTSYVNPVAMKCVDVRKNHRSSKWLMPWGTEPCKSIQSFDEAANRMIEANDIVFAAHIPNSQFEMSPWFQFMLVVLQLDIAFKLNNYIEENSMVTLDVSVAYRDDLKEEWKELASSVEQRKLNCILPVEKTLANEGRHYDCDVIPLMELGSVSHKYYLFNIRLPVNERKKANIGIGEIRDLHVVSIFQNGGFTMVWFAMKTFLTPSIIIIMIWYWRRITMMTRSPVLLEKVIFALGFSMTFINIPVEWFSIGYDWTWMLLFGDIRQGIFYAMLLSFWIIFCGEHMMDQTERNRISVYWKQVGPIAFGSCCLFIFDMCERGVQLKNPFYSIWTTDVGAEIAMAFIIVAGICACLYFLFLCFMVYQVFRNISGKQSNLPAMTKARRLHYEGLIFRFKFLMIITLACAALTIVFFITTQITEGNWKLGDLSIELNSAFFTGVYGMWNLYVFALMFLYAPSHKHYGDGQSNDGAGMSSGEELQLTTTITHIDGPTEVYRLAGKEAQE.

Positions 1-28 (MAGAIIENMSTKKLCMVGVALLLLQVLA) are cleaved as a signal peptide. At 29–232 (FLVGGLIAPK…SIFQNGGFTM (204 aa)) the chain is on the lumenal side. Residues 233 to 253 (VWFAMKTFLTPSIIIIMIWYW) traverse the membrane as a helical segment. Residues 254–268 (RRITMMTRSPVLLEK) are Cytoplasmic-facing. Residues 269–289 (VIFALGFSMTFINIPVEWFSI) form a helical membrane-spanning segment. Residues 290 to 303 (GYDWTWMLLFGDIR) are Lumenal-facing. The helical transmembrane segment at 304-324 (QGIFYAMLLSFWIIFCGEHMM) threads the bilayer. Residues 325–331 (DQTERNR) are Cytoplasmic-facing. Residues 332-352 (ISVYWKQVGPIAFGSCCLFIF) form a helical membrane-spanning segment. Residues 353-379 (DMCERGVQLKNPFYSIWTTDVGAEIAM) lie on the Lumenal side of the membrane. A helical transmembrane segment spans residues 380–400 (AFIIVAGICACLYFLFLCFMV). Residues 401 to 431 (YQVFRNISGKQSNLPAMTKARRLHYEGLIFR) lie on the Cytoplasmic side of the membrane. Residues 432 to 452 (FKFLMIITLACAALTIVFFIT) form a helical membrane-spanning segment. At 453–471 (TQITEGNWKLGDLSIELNS) the chain is on the lumenal side. Residues 472 to 492 (AFFTGVYGMWNLYVFALMFLY) form a helical membrane-spanning segment. At 493-541 (APSHKHYGDGQSNDGAGMSSGEELQLTTTITHIDGPTEVYRLAGKEAQE) the chain is on the cytoplasmic side.

This sequence belongs to the wntless family.

Its subcellular location is the golgi apparatus membrane. The protein resides in the cytoplasmic vesicle membrane. Required for a subset of Wnt-dependent developmental processes, in particular, eye and pronephros development. Regulates the secretion of wnt4, which is required for eye development. This chain is Protein wntless homolog A (wls-a), found in Xenopus laevis (African clawed frog).